The following is a 159-amino-acid chain: V-type proton ATPase 16 kDa proteolipid subunit c (159 aa).

The Lumenal portion of the chain corresponds to 1–12; sequence MSSEVSSDNPIY. A helical transmembrane segment spans residues 13–35; the sequence is GPFFGVMGAASAIIFSALGAAYG. Topologically, residues 36-57 are cytoplasmic; it reads TAKSGTGIAAMSVMRPELIMKS. A helical transmembrane segment spans residues 58-78; that stretch reads IIPVVMAGIIAIYGLVVAVLI. Over 79 to 96 the chain is Lumenal; it reads AGALEEPSKYSLYRGFIH. A helical transmembrane segment spans residues 97–118; that stretch reads LGAGLAVGFSGLAAGFAIGIVG. Topologically, residues 119–130 are cytoplasmic; the sequence is DAGVRGTAQQPR. Residues 131–156 form a helical membrane-spanning segment; that stretch reads LFVGMILILIFAEVLGLYGLIVAIYL. At 157 to 159 the chain is on the lumenal side; the sequence is YTK.

Belongs to the V-ATPase proteolipid subunit family. V-ATPase is a heteromultimeric enzyme made up of two complexes: the ATP-hydrolytic V1 complex and the proton translocation V0 complex. The V1 complex consists of three catalytic AB heterodimers that form a heterohexamer, three peripheral stalks each consisting of EG heterodimers, one central rotor including subunits D and F, and the regulatory subunits C and H. The proton translocation complex V0 consists of the proton transport subunit a, a ring of proteolipid subunits c9c'', rotary subunit d, subunits e and f, and the accessory subunits VhaAC45 and ATP6AP2. As to expression, expressed in the larval middle mid-gut; predominantly in the copper cell region with lower levels of expression in the interstitial cells.

The protein localises to the membrane. Proton-conducting pore forming subunit of the V0 complex of vacuolar(H+)-ATPase (V-ATPase), a multisubunit enzyme composed of a peripheral complex (V1) that hydrolyzes ATP and a membrane integral complex (V0) that translocates protons. V-ATPase is responsible for acidifying and maintaining the pH of intracellular compartments and in some cell types, is targeted to the plasma membrane, where it is responsible for acidifying the extracellular environment. In enterocytes, acts as part of a pHCl-2 sensory pathway which mediates Tor-dependent larval growth and metabolism in response to zinc availability. Likely acts in maintaining enterocyte lysosomal acidification which consequently promotes Tor activation at the lysosome membrane. In Drosophila melanogaster (Fruit fly), this protein is V-type proton ATPase 16 kDa proteolipid subunit c (Vha16-1).